Consider the following 298-residue polypeptide: MLFLVGLGLSSHEDITVRGLNAVKRCARVYLEHYTSILMTASKEELEGFYGKPVVLADREMVESGCEEILRDADKEDVAFLVVGDPFGATTHTDLVLRAKKQGIVVEVVHNASVMNAVGSCGLQLYNFGQTISMVFFTDSWRPDSWYDKVLENRRIGLHTLVLLDIKVKEQSPENLARGRLIFEPPRYMSISQCCEQLLEVEEKRGQQAYTPDTPCVAISRLGAPTQHMKSGSIHELAEYDAGEPLHSLVILGRQCHELELEYLLEFSEDQERFKDQVHRDQEFFKPAPWVPPPEDED.

S-adenosyl-L-methionine is bound by residues Leu-9, Asp-85, Gly-88, 113–114 (SV), Leu-164, Leu-222, and His-247.

Belongs to the diphthine synthase family.

It is found in the cytoplasm. The catalysed reaction is 2-[(3S)-amino-3-carboxypropyl]-L-histidyl-[translation elongation factor 2] + 4 S-adenosyl-L-methionine = diphthine methyl ester-[translation elongation factor 2] + 4 S-adenosyl-L-homocysteine + 3 H(+). The protein operates within protein modification; peptidyl-diphthamide biosynthesis. In terms of biological role, S-adenosyl-L-methionine-dependent methyltransferase that catalyzes four methylations of the modified target histidine residue in translation elongation factor 2 (EF-2), to form an intermediate called diphthine methyl ester. The four successive methylation reactions represent the second step of diphthamide biosynthesis. The chain is Diphthine methyl ester synthase (DPH5) from Eremothecium gossypii (strain ATCC 10895 / CBS 109.51 / FGSC 9923 / NRRL Y-1056) (Yeast).